A 104-amino-acid chain; its full sequence is Succinate dehydrogenase assembly factor 4, mitochondrial (104 aa).

A mitochondrion-targeting transit peptide spans 1-30 (MVSTTLSVSRMTFVWRAARPSLLNHSLRKM). Residues 29 to 104 (KMSYQEGKPE…WERKGRCIDF (76 aa)) form a disordered region. Composition is skewed to basic and acidic residues over residues 63–83 (EREPLQKFPDDVNPVTKEKGG) and 91–104 (RYGDWERKGRCIDF).

The protein belongs to the SDHAF4 family. Interacts with Sdha in its FAD-bound form.

The protein localises to the mitochondrion matrix. Plays an essential role in the assembly of succinate dehydrogenase (SDH), an enzyme complex (also referred to as respiratory complex II) that is a component of both the tricarboxylic acid (TCA) cycle and the mitochondrial electron transport chain, and which couples the oxidation of succinate to fumarate with the reduction of ubiquinone (coenzyme Q) to ubiquinol. Binds to the flavoprotein subunit Sdha in its FAD-bound form, blocking the generation of excess reactive oxygen species (ROS) and facilitating its assembly with the iron-sulfur protein subunit Sdhb into the SDH catalytic dimer. This Mus musculus (Mouse) protein is Succinate dehydrogenase assembly factor 4, mitochondrial.